The sequence spans 133 residues: Bacteriohemerythrin (133 aa).

Residues histidine 19, histidine 56, glutamate 60, histidine 75, histidine 79, histidine 115, and aspartate 120 each contribute to the Fe cation site.

The protein belongs to the hemerythrin family. Monomer.

Its function is as follows. Oxygen-binding protein. May be involved in a storage mechanism or for delivery to oxygen-requiring enzymes. The oxygen-binding site contains two iron atoms. The polypeptide is Bacteriohemerythrin (Campylobacter jejuni subsp. jejuni serotype O:23/36 (strain 81-176)).